Consider the following 785-residue polypeptide: Semaphorin-3E (785 aa).

Residues 1–25 form the signal peptide; that stretch reads MLGRMASAQDLLILALCGLLLELPA. The 485-residue stretch at 36–520 folds into the Sema domain; sequence RLRLSHKELW…TESVIAQVKF (485 aa). An N-linked (GlcNAc...) asparagine glycan is attached at Asn-48. The cysteines at positions 109 and 119 are disulfide-linked. Asn-130 carries an N-linked (GlcNAc...) asparagine glycan. Disulfide bonds link Cys-137/Cys-146, Cys-274/Cys-386, Cys-298/Cys-346, and Cys-523/Cys-541. N-linked (GlcNAc...) asparagine glycosylation is present at Asn-600. The Ig-like C2-type domain occupies 651–740; it reads LDAGTYFCQT…EYCEKVWCTD (90 aa). A disulfide bridge links Cys-658 with Cys-733. A disordered region spans residues 744 to 785; sequence KKLKMSPSKWKYANPQEKRQDQEKKARIRPEHYRLPRNIADS. Residues 759-777 show a composition bias toward basic and acidic residues; that stretch reads QEKRQDQEKKARIRPEHYR.

Belongs to the semaphorin family. Collapsin-1, -2, -3, and -5 bind to overlapping but distinct axon tracts.

The protein localises to the secreted. In terms of biological role, plays an important role in signaling via the cell surface receptor PLXND1. Mediates reorganization of the actin cytoskeleton, leading to the retraction of cell projections. Promotes focal adhesion disassembly and inhibits adhesion of endothelial cells to the extracellular matrix. Regulates angiogenesis. Can down-regulate sprouting angiogenesis. Required for normal vascular patterning during embryogenesis. Induces the collapse and paralysis of neuronal growth cones. Plays an important role in ensuring the specificity of synapse formation. This chain is Semaphorin-3E (SEMA3E), found in Gallus gallus (Chicken).